The chain runs to 273 residues: Octanoyltransferase LipM (273 aa).

The region spanning 33–244 (GKTPPTLRFY…AFTRLYAVEF (212 aa)) is the BPL/LPL catalytic domain. Cys146 (acyl-thioester intermediate) is an active-site residue.

The protein belongs to the octanoyltransferase LipM family. Monomer.

The enzyme catalyses octanoyl-[ACP] + L-lysyl-[protein] = N(6)-octanoyl-L-lysyl-[protein] + holo-[ACP] + H(+). The protein operates within protein modification; protein lipoylation via endogenous pathway; protein N(6)-(lipoyl)lysine from octanoyl-[acyl-carrier-protein]. In terms of biological role, catalyzes the transfer of endogenously produced octanoic acid from octanoyl-acyl-carrier-protein onto the lipoyl domain of GcvH, an intermediate carrier during protein lipoylation. This chain is Octanoyltransferase LipM, found in Moorella thermoacetica (strain ATCC 39073 / JCM 9320).